A 583-amino-acid polypeptide reads, in one-letter code: MLO-like protein 6 (583 aa).

The Extracellular portion of the chain corresponds to 1 to 15; it reads MADQVKEKTLEETST. A helical transmembrane segment spans residues 16-36; the sequence is WAVAVVCFVLLLISIVIEKLI. Over 37–61 the chain is Cytoplasmic; it reads HKIGSWFKKKNKKALYEALEKVKAE. Residues 62–82 traverse the membrane as a helical segment; the sequence is LMLMGFISLLLTIGQGYISNI. Residues 83 to 161 lie on the Extracellular side of the membrane; that stretch reads CIPKNIAASM…VSAYGMHQLH (79 aa). The chain crosses the membrane as a helical span at residues 162 to 182; sequence IFIFVLAVCHVIYCIVTYALG. Residues 183–284 lie on the Cytoplasmic side of the membrane; it reads KTKMRRWKKW…KYIQRSLEED (102 aa). A helical membrane pass occupies residues 285–305; sequence FKTIVEINPVIWFIAVLFLLT. At 306-314 the chain is on the extracellular side; that stretch reads NTNGLNSYL. The chain crosses the membrane as a helical span at residues 315–335; it reads WLPFIPFIVILIVGTKLQVII. The Cytoplasmic portion of the chain corresponds to 336–368; it reads TKLGLRIQEKGDVVKGTPLVQPGDHFFWFGRPR. The helical transmembrane segment at 369–389 threads the bilayer; sequence FILFLIHLVLFTNAFQLAFFV. Residues 390 to 411 lie on the Extracellular side of the membrane; the sequence is WSTYEFGLKNCFHESRVDVIIR. The chain crosses the membrane as a helical span at residues 412–432; that stretch reads ISIGLLVQILCSYVTLPLYAL. At 433-583 the chain is on the cytoplasmic side; sequence VTQMGSKMKP…ISLRDFSFKR (151 aa). Residues 447–468 are calmodulin-binding; it reads ERVATALKSWHHTAKKNIKHGR. Residues 461 to 583 are disordered; the sequence is KKNIKHGRTS…ISLRDFSFKR (123 aa). A compositionally biased stretch (low complexity) spans 470 to 484; sequence SESTTPFSSRPTTPT. Residues 541 to 551 are compositionally biased toward basic and acidic residues; that stretch reads RFGEEESEKKF.

This sequence belongs to the MLO family.

The protein resides in the membrane. In terms of biological role, may be involved in modulation of pathogen defense and leaf cell death. Activity seems to be regulated by Ca(2+)-dependent calmodulin binding and seems not to require heterotrimeric G proteins. The protein is MLO-like protein 6 (MLO6) of Arabidopsis thaliana (Mouse-ear cress).